Reading from the N-terminus, the 251-residue chain is Phosphomannomutase (251 aa).

Asp18 serves as the catalytic Nucleophile. Mg(2+) contacts are provided by Asp18 and Asp20. Asp20 functions as the Proton donor/acceptor in the catalytic mechanism. Alpha-D-mannose 1-phosphate contacts are provided by Arg27, Arg129, Arg140, Arg147, Ser185, and Asp187. Mg(2+) is bound by residues Asp213, Phe225, Asp227, and Thr230.

It belongs to the eukaryotic PMM family. As to quaternary structure, homodimer. It depends on Mg(2+) as a cofactor.

Its subcellular location is the cytoplasm. It catalyses the reaction alpha-D-mannose 1-phosphate = D-mannose 6-phosphate. It functions in the pathway nucleotide-sugar biosynthesis; GDP-alpha-D-mannose biosynthesis; alpha-D-mannose 1-phosphate from D-fructose 6-phosphate: step 2/2. Its function is as follows. Catalyzes the interconversion of mannose-6-phosphate to mannose-1-phosphate, the precursor for the synthesis of GDP-mannose. GDP-mannose is an essential sugar nucleotide for the synthesis of D-mannose-containing cell wall polysaccharides (galactomannans and glucomannans), glycolipids, glycoproteins and the antioxidant L-ascorbate. The chain is Phosphomannomutase from Galdieria sulphuraria (Red alga).